Reading from the N-terminus, the 264-residue chain is uncharacterized protein (264 aa).

Residues 1–22 (MKSIKRIGLCISLLILIIFVTS) form the signal peptide. Cysteine 23 carries the N-palmitoyl cysteine lipid modification. Cysteine 23 is lipidated: S-diacylglycerol cysteine.

Belongs to the staphylococcal tandem lipoprotein family.

It is found in the cell membrane. This is an uncharacterized protein from Staphylococcus aureus (strain MRSA252).